The following is a 517-amino-acid chain: ATP synthase subunit alpha 1 (517 aa).

176-183 (GDRQTGKT) contacts ATP.

The protein belongs to the ATPase alpha/beta chains family. F-type ATPases have 2 components, CF(1) - the catalytic core - and CF(0) - the membrane proton channel. CF(1) has five subunits: alpha(3), beta(3), gamma(1), delta(1), epsilon(1). CF(0) has three main subunits: a(1), b(2) and c(9-12). The alpha and beta chains form an alternating ring which encloses part of the gamma chain. CF(1) is attached to CF(0) by a central stalk formed by the gamma and epsilon chains, while a peripheral stalk is formed by the delta and b chains.

Its subcellular location is the cell inner membrane. It carries out the reaction ATP + H2O + 4 H(+)(in) = ADP + phosphate + 5 H(+)(out). Its function is as follows. Produces ATP from ADP in the presence of a proton gradient across the membrane. The alpha chain is a regulatory subunit. The chain is ATP synthase subunit alpha 1 from Shewanella frigidimarina (strain NCIMB 400).